The following is a 123-amino-acid chain: Large ribosomal subunit protein uL14 (123 aa).

Belongs to the universal ribosomal protein uL14 family. In terms of assembly, part of the 50S ribosomal subunit. Forms a cluster with proteins L3 and L19. In the 70S ribosome, L14 and L19 interact and together make contacts with the 16S rRNA in bridges B5 and B8.

Its function is as follows. Binds to 23S rRNA. Forms part of two intersubunit bridges in the 70S ribosome. The protein is Large ribosomal subunit protein uL14 of Corynebacterium jeikeium (strain K411).